The following is a 312-amino-acid chain: Acetyl-coenzyme A carboxylase carboxyl transferase subunit alpha (312 aa).

Residues 36-286 enclose the CoA carboxyltransferase C-terminal domain; sequence ELEKEIEKTF…KTYFLESVKA (251 aa).

Belongs to the AccA family. In terms of assembly, acetyl-CoA carboxylase is a heterohexamer composed of biotin carboxyl carrier protein (AccB), biotin carboxylase (AccC) and two subunits each of ACCase subunit alpha (AccA) and ACCase subunit beta (AccD).

The protein localises to the cytoplasm. The enzyme catalyses N(6)-carboxybiotinyl-L-lysyl-[protein] + acetyl-CoA = N(6)-biotinyl-L-lysyl-[protein] + malonyl-CoA. The protein operates within lipid metabolism; malonyl-CoA biosynthesis; malonyl-CoA from acetyl-CoA: step 1/1. Its function is as follows. Component of the acetyl coenzyme A carboxylase (ACC) complex. First, biotin carboxylase catalyzes the carboxylation of biotin on its carrier protein (BCCP) and then the CO(2) group is transferred by the carboxyltransferase to acetyl-CoA to form malonyl-CoA. The polypeptide is Acetyl-coenzyme A carboxylase carboxyl transferase subunit alpha (Sulfurovum sp. (strain NBC37-1)).